The sequence spans 295 residues: GTPase Era (295 aa).

The Era-type G domain occupies 7–176; the sequence is KTVSVCIIGR…ITSKAKIAPW (170 aa). Residues 15-22 form a G1 region; it reads GRPNSGKS. 15–22 serves as a coordination point for GTP; it reads GRPNSGKS. The G2 stretch occupies residues 41 to 45; sequence QTTRS. The tract at residues 62-65 is G3; the sequence is DTPG. GTP-binding positions include 62 to 66 and 124 to 127; these read DTPGI and NKIE. A G4 region spans residues 124 to 127; sequence NKIE. Residues 152 to 154 form a G5 region; the sequence is ISA. In terms of domain architecture, KH type-2 spans 204–281; that stretch reads LQQELPYKLT…HLFLFVKVRE (78 aa).

Belongs to the TRAFAC class TrmE-Era-EngA-EngB-Septin-like GTPase superfamily. Era GTPase family. In terms of assembly, monomer.

The protein localises to the cytoplasm. The protein resides in the cell inner membrane. Its function is as follows. An essential GTPase that binds both GDP and GTP, with rapid nucleotide exchange. Plays a role in 16S rRNA processing and 30S ribosomal subunit biogenesis and possibly also in cell cycle regulation and energy metabolism. The polypeptide is GTPase Era (Rickettsia canadensis (strain McKiel)).